The chain runs to 376 residues: Phosphoglycerate kinase (376 aa).

13 residues coordinate (2R)-3-phosphoglycerate: Val1, Asp2, Phe3, Asn4, Arg17, Ser40, His41, Gly43, Arg44, Leu99, Arg100, His147, and Arg148. Gly191 serves as a coordination point for ADP. Residue Gly191 participates in CDP binding. Residues Ala192 and Lys193 each contribute to the AMP site. Ala192 is a binding site for ATP. Ala192 is a binding site for Mg(2+). Asp196 contributes to the CDP binding site. A Mg(2+)-binding site is contributed by Asp196. Position 197 (Lys197) interacts with AMP. Lys197 is a binding site for ATP. ADP is bound at residue Gly215. Residue Gly215 participates in CDP binding. AMP contacts are provided by Gly216 and Gly290. ATP is bound by residues Gly216 and Gly290. CDP-binding residues include Gly315 and Phe320. Phe320 is a binding site for ADP. Glu321 is an AMP binding site. 3 residues coordinate ATP: Glu321, Asp352, and Thr353. Asp352 is a Mg(2+) binding site.

Belongs to the phosphoglycerate kinase family. As to quaternary structure, monomer. Requires Mg(2+) as cofactor.

The catalysed reaction is (2R)-3-phosphoglycerate + ATP = (2R)-3-phospho-glyceroyl phosphate + ADP. Its pathway is carbohydrate degradation; glycolysis; pyruvate from D-glyceraldehyde 3-phosphate: step 2/5. This Glaucoma chattoni protein is Phosphoglycerate kinase (PGK).